The primary structure comprises 586 residues: Protein cereblon (586 aa).

Disordered regions lie at residues 1 to 114 and 158 to 194; these read MDDE…LPRW and SQERRRSRTSEETSQEDVEQPEDPPPQQPPRPPIDIG. Basic and acidic residues predominate over residues 14 to 37; it reads GRDEDVQLEDHSQAQGLQDRRVDA. The segment covering 75–85 has biased composition (acidic residues); it reads MVEDGLQDDTA. Positions 86 to 96 are enriched in polar residues; it reads SEGSHPSSDMS. Basic and acidic residues predominate over residues 159 to 168; the sequence is QERRRSRTSE. The span at 170–179 shows a compositional bias: acidic residues; it reads TSQEDVEQPE. A compositionally biased stretch (pro residues) spans 180-190; it reads DPPPQQPPRPP. Residues 226-452 form the Lon N-terminal domain; the sequence is HMLIFLHQHI…LIKSTFTDES (227 aa). Positions 451–560 constitute a CULT domain; sequence ESLFFCRYCN…LAGSSVRIGK (110 aa). The Zn(2+) site is built by cysteine 456, cysteine 459, cysteine 525, and cysteine 528.

This sequence belongs to the CRBN family. In terms of assembly, likely a component of a DCX (DDB1-CUL4-X-box) protein ligase complex. May interact with pic/DDB1. Ubiquitinated.

It is found in the nucleus. The protein operates within protein modification; protein ubiquitination. Functionally, substrate recognition component of a DCX (DDB1-CUL4-X-box) E3 protein ligase complex that mediates the ubiquitination and subsequent proteasomal degradation of target proteins. Has an essential role in mediating growth by negatively regulating insulin signaling. It also has a role in maintaining presynaptic function in the neuromuscular junction synapses of third-instar larvae. This chain is Protein cereblon, found in Drosophila erecta (Fruit fly).